Here is a 487-residue protein sequence, read N- to C-terminus: Aspartyl/glutamyl-tRNA(Asn/Gln) amidotransferase subunit B (487 aa).

Belongs to the GatB/GatE family. GatB subfamily. Heterotrimer of A, B and C subunits.

It carries out the reaction L-glutamyl-tRNA(Gln) + L-glutamine + ATP + H2O = L-glutaminyl-tRNA(Gln) + L-glutamate + ADP + phosphate + H(+). The enzyme catalyses L-aspartyl-tRNA(Asn) + L-glutamine + ATP + H2O = L-asparaginyl-tRNA(Asn) + L-glutamate + ADP + phosphate + 2 H(+). Functionally, allows the formation of correctly charged Asn-tRNA(Asn) or Gln-tRNA(Gln) through the transamidation of misacylated Asp-tRNA(Asn) or Glu-tRNA(Gln) in organisms which lack either or both of asparaginyl-tRNA or glutaminyl-tRNA synthetases. The reaction takes place in the presence of glutamine and ATP through an activated phospho-Asp-tRNA(Asn) or phospho-Glu-tRNA(Gln). This is Aspartyl/glutamyl-tRNA(Asn/Gln) amidotransferase subunit B from Chlamydia caviae (strain ATCC VR-813 / DSM 19441 / 03DC25 / GPIC) (Chlamydophila caviae).